The chain runs to 217 residues: UPF0111 protein MTH_1689 (217 aa).

Belongs to the UPF0111 family.

This chain is UPF0111 protein MTH_1689, found in Methanothermobacter thermautotrophicus (strain ATCC 29096 / DSM 1053 / JCM 10044 / NBRC 100330 / Delta H) (Methanobacterium thermoautotrophicum).